The primary structure comprises 186 residues: Protein TRL14 (186 aa).

3 N-linked (GlcNAc...) asparagine; by host glycosylation sites follow: asparagine 24, asparagine 64, and asparagine 72. Residues 143-163 (HAVWAGVVVSVALIALYMGSH) form a helical membrane-spanning segment.

This sequence belongs to the RL11 family.

It is found in the virion membrane. The polypeptide is Protein TRL14 (Human cytomegalovirus (strain AD169) (HHV-5)).